A 175-amino-acid polypeptide reads, in one-letter code: Bifunctional protein PyrR (175 aa).

The PRPP-binding signature appears at 97 to 109 (IVLIDDVLFTGRT).

Belongs to the purine/pyrimidine phosphoribosyltransferase family. PyrR subfamily. As to quaternary structure, homodimer and homohexamer; in equilibrium.

It catalyses the reaction UMP + diphosphate = 5-phospho-alpha-D-ribose 1-diphosphate + uracil. In terms of biological role, regulates transcriptional attenuation of the pyrimidine nucleotide (pyr) operon by binding in a uridine-dependent manner to specific sites on pyr mRNA. This disrupts an antiterminator hairpin in the RNA and favors formation of a downstream transcription terminator, leading to a reduced expression of downstream genes. Also displays a weak uracil phosphoribosyltransferase activity which is not physiologically significant. The chain is Bifunctional protein PyrR from Leuconostoc mesenteroides subsp. mesenteroides (strain ATCC 8293 / DSM 20343 / BCRC 11652 / CCM 1803 / JCM 6124 / NCDO 523 / NBRC 100496 / NCIMB 8023 / NCTC 12954 / NRRL B-1118 / 37Y).